We begin with the raw amino-acid sequence, 114 residues long: Putative movement protein (114 aa).

Residues leucine 27–leucine 47 traverse the membrane as a helical segment. The disordered stretch occupies residues arginine 79 to phenylalanine 114. The segment covering glycine 86–arginine 97 has biased composition (basic and acidic residues). Residues glutamine 98–phenylalanine 114 show a composition bias toward polar residues.

It belongs to the nanovirus movement protein family.

The protein resides in the host cell membrane. May transport viral genome to neighboring plant cells directly through plasmosdesmata, without any budding. The movement protein allows efficient cell to cell propagation, by bypassing the host cell wall barrier. The chain is Putative movement protein (DNA-M) from Faba bean necrotic yellows virus (isolate Syrian SV292-88) (FBNYV).